The following is a 728-amino-acid chain: Histone demethylase JHD2 (728 aa).

Residues 4 to 47 (IPALYPTEQEFKNPIDYLSNPHIKRLGVRYGMVKVVPPNGFCPP) form the JmjN domain. A PHD-type zinc finger spans residues 235–285 (DDACIVCRKTNDPKRTILCDSCDKPFHIYCLSPPLERVPSGDWICNTCIVG). Residues 381–549 (KYCDHPMNLT…YGFGAITDYK (169 aa)) form the JmjC domain. Residues histidine 427, aspartate 430, and histidine 517 each contribute to the Fe cation site.

Belongs to the JARID1 histone demethylase family. Fe(2+) is required as a cofactor.

The protein localises to the nucleus. It carries out the reaction N(6),N(6),N(6)-trimethyl-L-lysyl(4)-[histone H3] + 3 2-oxoglutarate + 3 O2 = L-lysyl(4)-[histone H3] + 3 formaldehyde + 3 succinate + 3 CO2. Histone demethylase that demethylates 'Lys-4' of histone H3, thereby playing a central role in histone code. Demethylates trimethylated H3 'Lys-4'. This is Histone demethylase JHD2 (JHD2) from Saccharomyces cerevisiae (strain ATCC 204508 / S288c) (Baker's yeast).